The following is a 274-amino-acid chain: Thymidylate synthase (274 aa).

Arg21 contacts dUMP. His51 is a (6R)-5,10-methylene-5,6,7,8-tetrahydrofolate binding site. 123–124 (RR) lines the dUMP pocket. Cys156 acts as the Nucleophile in catalysis. Residues 176-179 (RSAD), Asn187, and 217-219 (HIY) contribute to the dUMP site. Asp179 contacts (6R)-5,10-methylene-5,6,7,8-tetrahydrofolate. Position 273 (Ser273) interacts with (6R)-5,10-methylene-5,6,7,8-tetrahydrofolate.

It belongs to the thymidylate synthase family. Bacterial-type ThyA subfamily. As to quaternary structure, homodimer.

It is found in the cytoplasm. It catalyses the reaction dUMP + (6R)-5,10-methylene-5,6,7,8-tetrahydrofolate = 7,8-dihydrofolate + dTMP. It functions in the pathway pyrimidine metabolism; dTTP biosynthesis. Catalyzes the reductive methylation of 2'-deoxyuridine-5'-monophosphate (dUMP) to 2'-deoxythymidine-5'-monophosphate (dTMP) while utilizing 5,10-methylenetetrahydrofolate (mTHF) as the methyl donor and reductant in the reaction, yielding dihydrofolate (DHF) as a by-product. This enzymatic reaction provides an intracellular de novo source of dTMP, an essential precursor for DNA biosynthesis. The protein is Thymidylate synthase of Francisella tularensis subsp. tularensis (strain SCHU S4 / Schu 4).